A 509-amino-acid chain; its full sequence is Zinc metalloproteinase aureolysin (509 aa).

An N-terminal signal peptide occupies residues 1–27 (MRKFSRYAFTSMATVTLLSSLTPAALA). A propeptide spanning residues 28–208 (SDTNHKPATS…VVEKTNLVKE (181 aa)) is cleaved from the precursor. D348 lines the Ca(2+) pocket. Residue H352 participates in Zn(2+) binding. E353 is a catalytic residue. Zn(2+)-binding residues include H356 and E376. Residues D387, E389, D390, L392, E395, Y398, T399, K402, and D405 each contribute to the Ca(2+) site. H436 acts as the Proton donor in catalysis.

The protein belongs to the peptidase M4 family. In terms of assembly, monomer. It depends on Ca(2+) as a cofactor. Zn(2+) serves as cofactor.

It carries out the reaction Cleavage of insulin B chain with specificity similar to that of thermolysin, preferring hydrophobic P1' residues. Activates the glutamyl endopeptidase (EC 3.4.21.19) of Staphylococcus aureus.. Plays an essential role in immune evasion by helping bacteria to resist complement-mediated killing by neutrophils. Inhibits the deposition of host C3b on bacterial surfaces and the release of the chemoattractant C5a by cleaving the central complement protein C3. The cleavage site renders the C3b molecule vulnerable to proteolytic degradation by host regulators. Cleaves and inactivates host SERPINA1, which is an endogenous protease inhibitor essential for controlling neutrophil serine protease elastase. Also plays an essential role in the cleavage and subsequent activation of the serine protease SspA (glutamyl endopeptidase) which is involved in colonization and infection of human tissues. The protein is Zinc metalloproteinase aureolysin of Staphylococcus aureus.